Here is a 332-residue protein sequence, read N- to C-terminus: NADH-quinone oxidoreductase subunit H (332 aa).

9 helical membrane passes run 8-28, 44-66, 78-98, 120-140, 157-177, 196-216, 245-265, 274-294, and 312-332; these read IIECILKIIVVLLIFSALAGF, IGPNYVGPYGLLQVVADGIKLFA, PIFILAPSIAAITAFIAMAPI, VGILFVLAVSSCGIYAPLLAG, IQFLSFEVITILSLLAPLMII, WLIFKQPLAFGLFIIAAYVEL, MFFIGEYANMFATAFILSLVF, FIPGGIAILLKVCFFIFLFMW, and WKIMLPLALLNVLITGCILLF.

It belongs to the complex I subunit 1 family. In terms of assembly, NDH-1 is composed of 14 different subunits. Subunits NuoA, H, J, K, L, M, N constitute the membrane sector of the complex.

The protein resides in the cell inner membrane. It carries out the reaction a quinone + NADH + 5 H(+)(in) = a quinol + NAD(+) + 4 H(+)(out). In terms of biological role, NDH-1 shuttles electrons from NADH, via FMN and iron-sulfur (Fe-S) centers, to quinones in the respiratory chain. The immediate electron acceptor for the enzyme in this species is believed to be ubiquinone. Couples the redox reaction to proton translocation (for every two electrons transferred, four hydrogen ions are translocated across the cytoplasmic membrane), and thus conserves the redox energy in a proton gradient. This subunit may bind ubiquinone. The sequence is that of NADH-quinone oxidoreductase subunit H from Helicobacter hepaticus (strain ATCC 51449 / 3B1).